Here is a 219-residue protein sequence, read N- to C-terminus: Redox-sensing transcriptional repressor Rex (219 aa).

Positions 17 to 56 (RYLRYVEDLLNHDIMRISSSELSQRMGYTASQVRQDFNNF) form a DNA-binding region, H-T-H motif. 91–96 (GVGNLG) provides a ligand contact to NAD(+).

Belongs to the transcriptional regulatory Rex family. As to quaternary structure, homodimer.

It localises to the cytoplasm. In terms of biological role, modulates transcription in response to changes in cellular NADH/NAD(+) redox state. This is Redox-sensing transcriptional repressor Rex from Caldicellulosiruptor saccharolyticus (strain ATCC 43494 / DSM 8903 / Tp8T 6331).